Reading from the N-terminus, the 703-residue chain is Arf-GAP with GTPase, ANK repeat and PH domain-containing protein 9 (703 aa).

Disordered stretches follow at residues 249 to 287 (KRNG…TPTP), 299 to 323 (FTSE…TIGS), and 427 to 449 (SSTT…KHLK). Over residues 271-286 (QEDPQFSVPPTANTPT) the composition is skewed to polar residues. The segment covering 303 to 318 (KGSDPDKERKAPENHA) has biased composition (basic and acidic residues). In terms of domain architecture, PH spans 327-488 (IPIKQGMLLK…WVQAIQSQIL (162 aa)). In terms of domain architecture, Arf-GAP spans 509-629 (AMALQSIQNM…LFLAPLPCTE (121 aa)). A C4-type zinc finger spans residues 524 to 547 (CVDCETQNPKWASLNLGVLMCIEC). An ANK repeat occupies 631–700 (SLGQQLLRAT…WTSWPEMPTG (70 aa)).

This sequence belongs to the centaurin gamma-like family.

In terms of biological role, putative GTPase-activating protein. The sequence is that of Arf-GAP with GTPase, ANK repeat and PH domain-containing protein 9 (AGAP9) from Homo sapiens (Human).